We begin with the raw amino-acid sequence, 246 residues long: MSALLILALVGAAVAFPLEDDDKIVGGYTCPEHSVPYQVSLNSGYHFCGGSLINDQWVVSAAHCYKSRIQVRLGEHNINVLEGDEQFINAAKIIKHPNYSSWTLNNDIMLIKLSSPVKLNARVAPVALPSACAPAGTQCLISGWGNTLSNGVNNPDLLQCVDAPVLSQADCEAAYPGEITSSMICVGFLEGGKDSCQGDSGGPVVCNGQLQGIVSWGYGCALPDNPGVYTKVCNFVGWIQDTIAAN.

A signal peptide spans 1–15 (MSALLILALVGAAVA). A propeptide spans 16-23 (FPLEDDDK) (activation peptide). Residues 24–244 (IVGGYTCPEH…FVGWIQDTIA (221 aa)) enclose the Peptidase S1 domain. Cystine bridges form between C30–C160, C48–C64, C132–C233, C139–C206, C171–C185, and C196–C220. Catalysis depends on H63, which acts as the Charge relay system. Ca(2+) is bound by residues E75, N77, V80, and E85. D107 acts as the Charge relay system in catalysis. The Charge relay system role is filled by S200.

The protein belongs to the peptidase S1 family. Interacts with SERPINA1. Ca(2+) serves as cofactor.

The protein resides in the secreted. The protein localises to the extracellular space. The enzyme catalyses Preferential cleavage: Arg-|-Xaa, Lys-|-Xaa.. This Rattus norvegicus (Rat) protein is Serine protease 1.